The primary structure comprises 31 residues: Potassium channel toxin alpha-KTx 5.1 (31 aa).

Disulfide bonds link C3/C21, C8/C26, and C12/C28. The interval 6–9 (RMCQ) is [R/K]XCQ motif. Position 31 is a histidine amide (H31).

The protein belongs to the short scorpion toxin superfamily. Potassium channel inhibitor family. Alpha-KTx 05 subfamily. Post-translationally, two disulfide bonds are the minimal requirement needed to produce a nativelike and bio-active conformation in this toxin. The third disulfide provides an additional contribution to structure stabilization and can modulate biological potency depending on its position and the structural regions involved in biological activity. In terms of tissue distribution, expressed by the venom gland.

The protein localises to the secreted. In terms of biological role, blocker for the small conductance calcium-activated potassium channels. Shows the best affinity for KCa2.2/KCNN2 (Kd=0.2 nM), followed by KCa2.3/KCNN3 (Kd=1.1 nM) and KCa2.1/KCNN1 (Kd=325 nM). The sequence is that of Potassium channel toxin alpha-KTx 5.1 from Leiurus hebraeus (Hebrew deathstalker scorpion).